Reading from the N-terminus, the 557-residue chain is uncharacterized protein (557 aa).

An N-terminal signal peptide occupies residues Met-1 to Ala-30. Cys-31 is lipidated: N-palmitoyl cysteine. The S-diacylglycerol cysteine moiety is linked to residue Cys-31.

To M.bovis Mb2616c and M.leprae ML0489.

It is found in the cell membrane. This is an uncharacterized protein from Mycobacterium tuberculosis (strain CDC 1551 / Oshkosh).